Consider the following 826-residue polypeptide: Eukaryotic translation initiation factor 3 subunit C (826 aa).

Disordered stretches follow at residues 1-71 (MSRF…GKGA) and 205-227 (SGGD…PRAK). Residues 10-20 (DSDDSSSDEDL) show a composition bias toward acidic residues. Over residues 21-30 (YGSGSESGSD) the composition is skewed to low complexity. The segment covering 32–65 (SQDEQDGGDDNDDDMSDDSMFADDSDDDSDDDED) has biased composition (acidic residues). The span at 218-227 (KEDKPKPRAK) shows a compositional bias: basic and acidic residues. Positions 605–779 (FHTHINLELL…NSVVFTQAVQ (175 aa)) constitute a PCI domain.

It belongs to the eIF-3 subunit C family. In terms of assembly, component of the eukaryotic translation initiation factor 3 (eIF-3) complex.

The protein localises to the cytoplasm. In terms of biological role, component of the eukaryotic translation initiation factor 3 (eIF-3) complex, which is involved in protein synthesis of a specialized repertoire of mRNAs and, together with other initiation factors, stimulates binding of mRNA and methionyl-tRNAi to the 40S ribosome. The eIF-3 complex specifically targets and initiates translation of a subset of mRNAs involved in cell proliferation. The polypeptide is Eukaryotic translation initiation factor 3 subunit C (Yarrowia lipolytica (strain CLIB 122 / E 150) (Yeast)).